A 217-amino-acid polypeptide reads, in one-letter code: UPF0502 protein ASA_1460 (217 aa).

Belongs to the UPF0502 family.

The protein is UPF0502 protein ASA_1460 of Aeromonas salmonicida (strain A449).